The primary structure comprises 341 residues: Dihydroorotate dehydrogenase (quinone) (341 aa).

FMN is bound by residues A61 to K65 and T85. K65 contacts substrate. Position 110–114 (N110–F114) interacts with substrate. Residues N138 and N171 each contribute to the FMN site. N171 provides a ligand contact to substrate. S174 serves as the catalytic Nucleophile. N176 is a binding site for substrate. FMN-binding residues include K216 and T244. N245–T246 is a substrate binding site. FMN contacts are provided by residues G267, G296, and Y317–S318.

This sequence belongs to the dihydroorotate dehydrogenase family. Type 2 subfamily. Monomer. Requires FMN as cofactor.

It localises to the cell membrane. The catalysed reaction is (S)-dihydroorotate + a quinone = orotate + a quinol. Its pathway is pyrimidine metabolism; UMP biosynthesis via de novo pathway; orotate from (S)-dihydroorotate (quinone route): step 1/1. Functionally, catalyzes the conversion of dihydroorotate to orotate with quinone as electron acceptor. The chain is Dihydroorotate dehydrogenase (quinone) from Pseudomonas fluorescens (strain SBW25).